The following is a 170-amino-acid chain: Shikimate kinase (170 aa).

15–20 contributes to the ATP binding site; it reads GAGKTT. A Mg(2+)-binding site is contributed by Thr19. Substrate is bound by residues Asp37, Arg61, and Gly83. Arg121 provides a ligand contact to ATP. Arg140 lines the substrate pocket.

The protein belongs to the shikimate kinase family. In terms of assembly, monomer. It depends on Mg(2+) as a cofactor.

It is found in the cytoplasm. It carries out the reaction shikimate + ATP = 3-phosphoshikimate + ADP + H(+). Its pathway is metabolic intermediate biosynthesis; chorismate biosynthesis; chorismate from D-erythrose 4-phosphate and phosphoenolpyruvate: step 5/7. Catalyzes the specific phosphorylation of the 3-hydroxyl group of shikimic acid using ATP as a cosubstrate. This chain is Shikimate kinase, found in Neisseria meningitidis serogroup C (strain 053442).